The sequence spans 352 residues: Selenide, water dikinase (352 aa).

Residue cysteine 23 is part of the active site. ATP is bound by residues lysine 26 and 54–56; that span reads SRD. Residue aspartate 57 participates in Mg(2+) binding. Residues aspartate 74, aspartate 97, and 145-147 each bind ATP; that span reads GHS. Aspartate 97 is a Mg(2+) binding site. Aspartate 233 is a binding site for Mg(2+).

This sequence belongs to the selenophosphate synthase 1 family. Class I subfamily. Homodimer. Mg(2+) serves as cofactor.

The catalysed reaction is hydrogenselenide + ATP + H2O = selenophosphate + AMP + phosphate + 2 H(+). Synthesizes selenophosphate from selenide and ATP. The chain is Selenide, water dikinase from Shewanella baltica (strain OS185).